We begin with the raw amino-acid sequence, 473 residues long: 3-isopropylmalate dehydratase large subunit (473 aa).

3 residues coordinate [4Fe-4S] cluster: cysteine 351, cysteine 414, and cysteine 417.

This sequence belongs to the aconitase/IPM isomerase family. LeuC type 1 subfamily. In terms of assembly, heterodimer of LeuC and LeuD. [4Fe-4S] cluster is required as a cofactor.

The enzyme catalyses (2R,3S)-3-isopropylmalate = (2S)-2-isopropylmalate. Its pathway is amino-acid biosynthesis; L-leucine biosynthesis; L-leucine from 3-methyl-2-oxobutanoate: step 2/4. Its function is as follows. Catalyzes the isomerization between 2-isopropylmalate and 3-isopropylmalate, via the formation of 2-isopropylmaleate. This Variovorax paradoxus (strain S110) protein is 3-isopropylmalate dehydratase large subunit.